The sequence spans 290 residues: Elongation factor Ts (290 aa).

An involved in Mg(2+) ion dislocation from EF-Tu region spans residues 79-82; that stretch reads TDFV.

This sequence belongs to the EF-Ts family.

The protein resides in the cytoplasm. Functionally, associates with the EF-Tu.GDP complex and induces the exchange of GDP to GTP. It remains bound to the aminoacyl-tRNA.EF-Tu.GTP complex up to the GTP hydrolysis stage on the ribosome. The sequence is that of Elongation factor Ts from Pseudoalteromonas atlantica (strain T6c / ATCC BAA-1087).